A 124-amino-acid chain; its full sequence is MATVNQLVRKPRAPKVDKTNVPALDACPQKRGVCTRVYTTTPKKPNSALRKVARVRLTNGFEVTSYIGGEGHNLQEHSVILIRGGRVKDLPGVRYHTVRGALDCAGVSERRQGRSKYGAKRPKS.

At D89 the chain carries 3-methylthioaspartic acid.

Belongs to the universal ribosomal protein uS12 family. As to quaternary structure, part of the 30S ribosomal subunit. Contacts proteins S8 and S17. May interact with IF1 in the 30S initiation complex.

In terms of biological role, with S4 and S5 plays an important role in translational accuracy. Interacts with and stabilizes bases of the 16S rRNA that are involved in tRNA selection in the A site and with the mRNA backbone. Located at the interface of the 30S and 50S subunits, it traverses the body of the 30S subunit contacting proteins on the other side and probably holding the rRNA structure together. The combined cluster of proteins S8, S12 and S17 appears to hold together the shoulder and platform of the 30S subunit. The protein is Small ribosomal subunit protein uS12 of Shewanella sediminis (strain HAW-EB3).